The following is a 476-amino-acid chain: 3-ketoacyl-CoA synthase 12 (476 aa).

The N-terminal stretch at 1–25 (MDLLFLFFSLLLSYLFFKIWKLIDS) is a signal peptide. Residues 26 to 313 (KQDKDCYILD…FMLKLLIKKI (288 aa)) enclose the FAE domain. Residues Cys-168, His-247, His-344, His-348, His-377, and Asn-381 contribute to the active site.

It belongs to the thiolase-like superfamily. Chalcone/stilbene synthases family. In terms of tissue distribution, expressed in siliques, flowers and leaves.

It localises to the endoplasmic reticulum. The catalysed reaction is a very-long-chain acyl-CoA + malonyl-CoA + H(+) = a very-long-chain 3-oxoacyl-CoA + CO2 + CoA. Its pathway is lipid metabolism; fatty acid biosynthesis. In Arabidopsis thaliana (Mouse-ear cress), this protein is 3-ketoacyl-CoA synthase 12.